The following is a 404-amino-acid chain: Biflaviolin synthase CYP158A2 (404 aa).

The flaviolin site is built by Arg-288 and Leu-293. Cys-353 serves as a coordination point for heme.

The protein belongs to the cytochrome P450 family. Requires heme as cofactor.

It carries out the reaction 2 flaviolin + 2 reduced [2Fe-2S]-[ferredoxin] + O2 + H(+) = 3,3'-biflaviolin + 2 oxidized [2Fe-2S]-[ferredoxin] + 2 H2O. It catalyses the reaction 2 flaviolin + 2 reduced [2Fe-2S]-[ferredoxin] + O2 + H(+) = 3,8'-biflaviolin + 2 oxidized [2Fe-2S]-[ferredoxin] + 2 H2O. It functions in the pathway pigment biosynthesis. Functionally, catalyzes oxidative C-C coupling reaction to polymerize flaviolin and form highly conjugated pigments which protect the soil bacterium from deleterious effects of UV irradiation (three isomers of biflaviolin and one triflaviolin). This chain is Biflaviolin synthase CYP158A2, found in Streptomyces coelicolor (strain ATCC BAA-471 / A3(2) / M145).